Here is a 491-residue protein sequence, read N- to C-terminus: UDP-N-acetylmuramate--L-alanine ligase (491 aa).

126–132 provides a ligand contact to ATP; the sequence is GTHGKTT.

Belongs to the MurCDEF family.

The protein resides in the cytoplasm. It catalyses the reaction UDP-N-acetyl-alpha-D-muramate + L-alanine + ATP = UDP-N-acetyl-alpha-D-muramoyl-L-alanine + ADP + phosphate + H(+). It participates in cell wall biogenesis; peptidoglycan biosynthesis. Its function is as follows. Cell wall formation. The polypeptide is UDP-N-acetylmuramate--L-alanine ligase (Salmonella agona (strain SL483)).